The primary structure comprises 124 residues: Small ribosomal subunit protein uS12 (124 aa).

The residue at position 89 (aspartate 89) is a 3-methylthioaspartic acid.

The protein belongs to the universal ribosomal protein uS12 family. As to quaternary structure, part of the 30S ribosomal subunit. Contacts proteins S8 and S17. May interact with IF1 in the 30S initiation complex.

In terms of biological role, with S4 and S5 plays an important role in translational accuracy. Interacts with and stabilizes bases of the 16S rRNA that are involved in tRNA selection in the A site and with the mRNA backbone. Located at the interface of the 30S and 50S subunits, it traverses the body of the 30S subunit contacting proteins on the other side and probably holding the rRNA structure together. The combined cluster of proteins S8, S12 and S17 appears to hold together the shoulder and platform of the 30S subunit. The chain is Small ribosomal subunit protein uS12 from Sodalis glossinidius (strain morsitans).